The following is a 613-amino-acid chain: Protein starmaker (613 aa).

The N-terminal stretch at 1–20 (MLSRTVFVPLILAFVGVSIS) is a signal peptide. The tract at residues 42-613 (FTVQFNVGTP…DGRKTSMPIS (572 aa)) is disordered. Composition is skewed to basic and acidic residues over residues 62-72 (DGKDSAEKNEA), 117-132 (SAEK…DKPD), 147-193 (DASH…KPEG), 206-284 (SAEK…KSDD), and 291-449 (DEQK…HSDS). Residues 450-465 (DSDSDSDSDSDSDSDS) show a composition bias toward acidic residues. Composition is skewed to basic and acidic residues over residues 467 to 482 (SNSR…SSES), 509 to 521 (DKDS…KTDS), and 538 to 554 (DDSK…TAEK). The span at 555–573 (TDEDSHDVSDDDDDIDAHD) shows a compositional bias: acidic residues. Basic and acidic residues predominate over residues 574 to 607 (DEAGVEHGTDEASKPHQEPDHHDDTTHGSDDGRK).

It localises to the secreted. Its function is as follows. Essential for the formation of otoliths in the inner ear of developing larvae and for the perception of gravity and acceleration. May be one of the organic components of the ortholiths. The sequence is that of Protein starmaker (stm) from Danio rerio (Zebrafish).